Here is a 244-residue protein sequence, read N- to C-terminus: 1-(5-phosphoribosyl)-5-[(5-phosphoribosylamino)methylideneamino] imidazole-4-carboxamide isomerase (244 aa).

The Proton acceptor role is filled by Asp10. Asp132 functions as the Proton donor in the catalytic mechanism.

Belongs to the HisA/HisF family.

It is found in the cytoplasm. The enzyme catalyses 1-(5-phospho-beta-D-ribosyl)-5-[(5-phospho-beta-D-ribosylamino)methylideneamino]imidazole-4-carboxamide = 5-[(5-phospho-1-deoxy-D-ribulos-1-ylimino)methylamino]-1-(5-phospho-beta-D-ribosyl)imidazole-4-carboxamide. It functions in the pathway amino-acid biosynthesis; L-histidine biosynthesis; L-histidine from 5-phospho-alpha-D-ribose 1-diphosphate: step 4/9. The polypeptide is 1-(5-phosphoribosyl)-5-[(5-phosphoribosylamino)methylideneamino] imidazole-4-carboxamide isomerase (Stenotrophomonas maltophilia (strain K279a)).